The chain runs to 152 residues: Nucleoside diphosphate kinase (152 aa).

6 residues coordinate ATP: Lys11, Phe59, Arg87, Thr93, Arg104, and Asn114. The active-site Pros-phosphohistidine intermediate is the His117.

The protein belongs to the NDK family. In terms of assembly, homotetramer. It depends on Mg(2+) as a cofactor.

It is found in the cytoplasm. It catalyses the reaction dZDP + ATP = dZTP + ADP. The catalysed reaction is a 2'-deoxyribonucleoside 5'-diphosphate + ATP = a 2'-deoxyribonucleoside 5'-triphosphate + ADP. The enzyme catalyses a ribonucleoside 5'-diphosphate + ATP = a ribonucleoside 5'-triphosphate + ADP. It participates in purine metabolism. Functionally, major role in the synthesis of nucleoside triphosphates other than ATP. The ATP gamma phosphate is transferred to the NDP beta phosphate via a ping-pong mechanism, using a phosphorylated active-site intermediate. (Microbial infection) Catalyzes the phosphorylation of dZDP to dZTP, when the bacterium is infected by a phage that produces the substrate for the synthesis of dZTP (2- amino-2'-deoxyadenosine 5'-triphosphate), which is then used by the phage as a DNA polymerase substrate. This Synechococcus sp. (strain WH7803) protein is Nucleoside diphosphate kinase.